The following is a 248-amino-acid chain: Small ribosomal subunit protein uS2 (248 aa).

The protein belongs to the universal ribosomal protein uS2 family.

In Cupriavidus necator (strain ATCC 17699 / DSM 428 / KCTC 22496 / NCIMB 10442 / H16 / Stanier 337) (Ralstonia eutropha), this protein is Small ribosomal subunit protein uS2.